The sequence spans 313 residues: Ribosomal RNA small subunit methyltransferase H (313 aa).

S-adenosyl-L-methionine contacts are provided by residues 35–37, Asp-53, Phe-80, Asp-101, and Gln-108; that span reads GGY.

It belongs to the methyltransferase superfamily. RsmH family.

The protein resides in the cytoplasm. It catalyses the reaction cytidine(1402) in 16S rRNA + S-adenosyl-L-methionine = N(4)-methylcytidine(1402) in 16S rRNA + S-adenosyl-L-homocysteine + H(+). Its function is as follows. Specifically methylates the N4 position of cytidine in position 1402 (C1402) of 16S rRNA. This Acidiphilium cryptum (strain JF-5) protein is Ribosomal RNA small subunit methyltransferase H.